A 504-amino-acid chain; its full sequence is Glutamate--tRNA ligase (504 aa).

Residues 14–24 carry the 'HIGH' region motif; sequence PSPTGYLHVGG. A 'KMSKS' region motif is present at residues 261-265; that stretch reads KLSKR. Residue lysine 264 participates in ATP binding.

The protein belongs to the class-I aminoacyl-tRNA synthetase family. Glutamate--tRNA ligase type 1 subfamily. As to quaternary structure, monomer.

Its subcellular location is the cytoplasm. The catalysed reaction is tRNA(Glu) + L-glutamate + ATP = L-glutamyl-tRNA(Glu) + AMP + diphosphate. In terms of biological role, catalyzes the attachment of glutamate to tRNA(Glu) in a two-step reaction: glutamate is first activated by ATP to form Glu-AMP and then transferred to the acceptor end of tRNA(Glu). This is Glutamate--tRNA ligase from Chlorobium luteolum (strain DSM 273 / BCRC 81028 / 2530) (Pelodictyon luteolum).